Reading from the N-terminus, the 155-residue chain is Ribosome-binding factor A (155 aa).

It belongs to the RbfA family. In terms of assembly, monomer. Binds 30S ribosomal subunits, but not 50S ribosomal subunits or 70S ribosomes.

It is found in the cytoplasm. Functionally, one of several proteins that assist in the late maturation steps of the functional core of the 30S ribosomal subunit. Associates with free 30S ribosomal subunits (but not with 30S subunits that are part of 70S ribosomes or polysomes). Required for efficient processing of 16S rRNA. May interact with the 5'-terminal helix region of 16S rRNA. This Methylocella silvestris (strain DSM 15510 / CIP 108128 / LMG 27833 / NCIMB 13906 / BL2) protein is Ribosome-binding factor A.